The following is a 574-amino-acid chain: Proline--tRNA ligase (574 aa).

It belongs to the class-II aminoacyl-tRNA synthetase family. ProS type 1 subfamily. As to quaternary structure, homodimer.

It localises to the cytoplasm. It catalyses the reaction tRNA(Pro) + L-proline + ATP = L-prolyl-tRNA(Pro) + AMP + diphosphate. Catalyzes the attachment of proline to tRNA(Pro) in a two-step reaction: proline is first activated by ATP to form Pro-AMP and then transferred to the acceptor end of tRNA(Pro). As ProRS can inadvertently accommodate and process non-cognate amino acids such as alanine and cysteine, to avoid such errors it has two additional distinct editing activities against alanine. One activity is designated as 'pretransfer' editing and involves the tRNA(Pro)-independent hydrolysis of activated Ala-AMP. The other activity is designated 'posttransfer' editing and involves deacylation of mischarged Ala-tRNA(Pro). The misacylated Cys-tRNA(Pro) is not edited by ProRS. The sequence is that of Proline--tRNA ligase from Sodalis glossinidius (strain morsitans).